The chain runs to 319 residues: Ribonucleoside-diphosphate reductase 2 subunit beta (319 aa).

Fe cation is bound by residues D67, E98, and H101. Y105 is a catalytic residue. Fe cation contacts are provided by E158, E192, and H195.

This sequence belongs to the ribonucleoside diphosphate reductase small chain family. As to quaternary structure, tetramer of two alpha and two beta subunits. It depends on Fe cation as a cofactor.

It carries out the reaction a 2'-deoxyribonucleoside 5'-diphosphate + [thioredoxin]-disulfide + H2O = a ribonucleoside 5'-diphosphate + [thioredoxin]-dithiol. Provides the precursors necessary for DNA synthesis. Catalyzes the biosynthesis of deoxyribonucleotides from the corresponding ribonucleotides. R2F contains the tyrosyl radical required for catalysis. The polypeptide is Ribonucleoside-diphosphate reductase 2 subunit beta (nrdF) (Escherichia coli (strain K12)).